We begin with the raw amino-acid sequence, 147 residues long: 3-dehydroquinate dehydratase (147 aa).

The active-site Proton acceptor is tyrosine 23. Residues asparagine 74, histidine 80, and aspartate 87 each contribute to the substrate site. The Proton donor role is filled by histidine 100. Substrate contacts are provided by residues isoleucine 101–serine 102 and arginine 111.

Belongs to the type-II 3-dehydroquinase family. As to quaternary structure, homododecamer.

It carries out the reaction 3-dehydroquinate = 3-dehydroshikimate + H2O. Its pathway is metabolic intermediate biosynthesis; chorismate biosynthesis; chorismate from D-erythrose 4-phosphate and phosphoenolpyruvate: step 3/7. Catalyzes a trans-dehydration via an enolate intermediate. The chain is 3-dehydroquinate dehydratase from Bacillus pumilus (strain SAFR-032).